Consider the following 968-residue polypeptide: RNA polymerase-associated protein RapA (968 aa).

The Helicase ATP-binding domain maps to 163–332; the sequence is EVGRRFAPRV…FARLRLLDPD (170 aa). 176–183 is a binding site for ATP; that stretch reads DEVGLGKT. The DEAH box motif lies at 278–281; sequence DEAH. The Helicase C-terminal domain occupies 491-641; that stretch reads RVDWLINFLK…AFEQTCPSGH (151 aa).

Belongs to the SNF2/RAD54 helicase family. RapA subfamily. As to quaternary structure, interacts with the RNAP. Has a higher affinity for the core RNAP than for the holoenzyme. Its ATPase activity is stimulated by binding to RNAP.

Its function is as follows. Transcription regulator that activates transcription by stimulating RNA polymerase (RNAP) recycling in case of stress conditions such as supercoiled DNA or high salt concentrations. Probably acts by releasing the RNAP, when it is trapped or immobilized on tightly supercoiled DNA. Does not activate transcription on linear DNA. Probably not involved in DNA repair. The sequence is that of RNA polymerase-associated protein RapA from Shewanella sediminis (strain HAW-EB3).